A 391-amino-acid chain; its full sequence is Glutamate 5-kinase (391 aa).

Position 17 (Lys-17) interacts with ATP. Substrate-binding residues include Ser-57, Asp-144, and Asn-156. ATP-binding positions include 176-177 and 216-222; these read SD and TGGMTTK. One can recognise a PUA domain in the interval 278–356; sequence QGQIVIDDGA…AWLAAEMGPA (79 aa). Residues 370-391 form a disordered region; that stretch reads SRRRKAEPSSRNQKSSGSRVTS. The span at 378 to 391 shows a compositional bias: polar residues; it reads SSRNQKSSGSRVTS.

Belongs to the glutamate 5-kinase family.

The protein resides in the cytoplasm. It catalyses the reaction L-glutamate + ATP = L-glutamyl 5-phosphate + ADP. It functions in the pathway amino-acid biosynthesis; L-proline biosynthesis; L-glutamate 5-semialdehyde from L-glutamate: step 1/2. Functionally, catalyzes the transfer of a phosphate group to glutamate to form L-glutamate 5-phosphate. This is Glutamate 5-kinase from Cutibacterium acnes (strain DSM 16379 / KPA171202) (Propionibacterium acnes).